The sequence spans 292 residues: MKLAILSRNSSLYSTRRLVEAARARGHTVRILDPLRCYMRIAADGFSMHYKGRPMTGVDMVIPRIGASITRYGTAVLRQFELMGARTPNPSDAILRSRDKLRAHQLLAAKGIDMPVTVFGDNPDDTVDLLSMLGPPPHVVKLNEGTQGRGVILTEKASASRGIVEALRGLYANFLMQEFIGEAKGADLRCFVVGDQVVASMQRQAPEGDFRSNLHAGGTAVAAKASRAEQQVAVRSAKALGLSVCGVDLIRSARGPLVLEVNSTPGLEGIEAACGVDVATRIIEHVEKLKKP.

Residues 104–287 form the ATP-grasp domain; the sequence is HQLLAAKGID…VATRIIEHVE (184 aa). Residues K141, 178 to 179, D187, and 211 to 213 each bind ATP; these read EF and RSN. Mg(2+) is bound by residues D248, E260, and N262. 3 residues coordinate Mn(2+): D248, E260, and N262.

The protein belongs to the RimK family. The cofactor is Mg(2+). Requires Mn(2+) as cofactor.

The chain is Probable alpha-L-glutamate ligase from Stenotrophomonas maltophilia (strain K279a).